The primary structure comprises 558 residues: Arginine--tRNA ligase (558 aa).

The short motif at Ala-134–Gln-144 is the 'HIGH' region element.

The protein belongs to the class-I aminoacyl-tRNA synthetase family. In terms of assembly, monomer.

The protein localises to the cytoplasm. It catalyses the reaction tRNA(Arg) + L-arginine + ATP = L-arginyl-tRNA(Arg) + AMP + diphosphate. This Symbiobacterium thermophilum (strain DSM 24528 / JCM 14929 / IAM 14863 / T) protein is Arginine--tRNA ligase.